A 335-amino-acid polypeptide reads, in one-letter code: MSTATSAVTVLGAGSYGTALAICLARNGHQVTLWGRNSDDVATLAAERKNQRYLPDIPFPDTLTLEADLQRAAASNEIVLVVVPSHAFGDTLKQIKPALQQGAKVAWATKGLEPNTGRLLQEVAVQELGDAIPLAVLSGPTFAKEMAMGSPTAISVSSTSTEFAQQLADLLHCGRSFRVYNNDDFIGIQLGGAVKNVIAIGAGISDGVGFGANARTALITRGLAELTRLGCALGAKPETFMGMAGLGDLILTCTDNQSRNRRFGLALGKGESVEAAIESIGQVVEGFRNTKEVYLLAQRSGVEMPITEQIYKVLYENKDMKEAAMALLGREQRSE.

Positions 15, 16, 36, and 110 each coordinate NADPH. Positions 110, 139, and 141 each coordinate sn-glycerol 3-phosphate. NADPH is bound at residue alanine 143. Residues lysine 195, aspartate 248, serine 258, arginine 259, and asparagine 260 each coordinate sn-glycerol 3-phosphate. Catalysis depends on lysine 195, which acts as the Proton acceptor. Arginine 259 provides a ligand contact to NADPH. The NADPH site is built by valine 283 and glutamate 285.

Belongs to the NAD-dependent glycerol-3-phosphate dehydrogenase family.

The protein resides in the cytoplasm. The enzyme catalyses sn-glycerol 3-phosphate + NAD(+) = dihydroxyacetone phosphate + NADH + H(+). It carries out the reaction sn-glycerol 3-phosphate + NADP(+) = dihydroxyacetone phosphate + NADPH + H(+). It participates in membrane lipid metabolism; glycerophospholipid metabolism. In terms of biological role, catalyzes the reduction of the glycolytic intermediate dihydroxyacetone phosphate (DHAP) to sn-glycerol 3-phosphate (G3P), the key precursor for phospholipid synthesis. The chain is Glycerol-3-phosphate dehydrogenase [NAD(P)+] from Pseudoalteromonas translucida (strain TAC 125).